We begin with the raw amino-acid sequence, 397 residues long: Carbamoyl phosphate synthase small chain (397 aa).

The segment at M1–K204 is CPSase. S53, G256, and G258 together coordinate L-glutamine. A Glutamine amidotransferase type-1 domain is found at K208 to E395. C284 functions as the Nucleophile in the catalytic mechanism. Positions 285, 288, 326, 328, and 329 each coordinate L-glutamine. Residues H368 and E370 contribute to the active site.

It belongs to the CarA family. In terms of assembly, composed of two chains; the small (or glutamine) chain promotes the hydrolysis of glutamine to ammonia, which is used by the large (or ammonia) chain to synthesize carbamoyl phosphate. Tetramer of heterodimers (alpha,beta)4.

It catalyses the reaction hydrogencarbonate + L-glutamine + 2 ATP + H2O = carbamoyl phosphate + L-glutamate + 2 ADP + phosphate + 2 H(+). The catalysed reaction is L-glutamine + H2O = L-glutamate + NH4(+). It participates in amino-acid biosynthesis; L-arginine biosynthesis; carbamoyl phosphate from bicarbonate: step 1/1. It functions in the pathway pyrimidine metabolism; UMP biosynthesis via de novo pathway; (S)-dihydroorotate from bicarbonate: step 1/3. Functionally, small subunit of the glutamine-dependent carbamoyl phosphate synthetase (CPSase). CPSase catalyzes the formation of carbamoyl phosphate from the ammonia moiety of glutamine, carbonate, and phosphate donated by ATP, constituting the first step of 2 biosynthetic pathways, one leading to arginine and/or urea and the other to pyrimidine nucleotides. The small subunit (glutamine amidotransferase) binds and cleaves glutamine to supply the large subunit with the substrate ammonia. This is Carbamoyl phosphate synthase small chain from Polynucleobacter asymbioticus (strain DSM 18221 / CIP 109841 / QLW-P1DMWA-1) (Polynucleobacter necessarius subsp. asymbioticus).